Consider the following 227-residue polypeptide: Cytochrome c oxidase subunit 2 (227 aa).

Over Met1–Ser14 the chain is Mitochondrial intermembrane. The chain crosses the membrane as a helical span at residues Pro15 to Thr45. Over Leu46 to Gln59 the chain is Mitochondrial matrix. A helical membrane pass occupies residues Glu60–Thr87. Residues Asp88–Leu227 are Mitochondrial intermembrane-facing. Cu cation contacts are provided by His161, Cys196, Glu198, Cys200, His204, and Met207. Glu198 provides a ligand contact to Mg(2+).

Belongs to the cytochrome c oxidase subunit 2 family. As to quaternary structure, component of the cytochrome c oxidase (complex IV, CIV), a multisubunit enzyme composed of 14 subunits. The complex is composed of a catalytic core of 3 subunits MT-CO1, MT-CO2 and MT-CO3, encoded in the mitochondrial DNA, and 11 supernumerary subunits COX4I, COX5A, COX5B, COX6A, COX6B, COX6C, COX7A, COX7B, COX7C, COX8 and NDUFA4, which are encoded in the nuclear genome. The complex exists as a monomer or a dimer and forms supercomplexes (SCs) in the inner mitochondrial membrane with NADH-ubiquinone oxidoreductase (complex I, CI) and ubiquinol-cytochrome c oxidoreductase (cytochrome b-c1 complex, complex III, CIII), resulting in different assemblies (supercomplex SCI(1)III(2)IV(1) and megacomplex MCI(2)III(2)IV(2)). Found in a complex with TMEM177, COA6, COX18, COX20, SCO1 and SCO2. Interacts with TMEM177 in a COX20-dependent manner. Interacts with COX20. Interacts with COX16. Cu cation is required as a cofactor.

It is found in the mitochondrion inner membrane. It catalyses the reaction 4 Fe(II)-[cytochrome c] + O2 + 8 H(+)(in) = 4 Fe(III)-[cytochrome c] + 2 H2O + 4 H(+)(out). In terms of biological role, component of the cytochrome c oxidase, the last enzyme in the mitochondrial electron transport chain which drives oxidative phosphorylation. The respiratory chain contains 3 multisubunit complexes succinate dehydrogenase (complex II, CII), ubiquinol-cytochrome c oxidoreductase (cytochrome b-c1 complex, complex III, CIII) and cytochrome c oxidase (complex IV, CIV), that cooperate to transfer electrons derived from NADH and succinate to molecular oxygen, creating an electrochemical gradient over the inner membrane that drives transmembrane transport and the ATP synthase. Cytochrome c oxidase is the component of the respiratory chain that catalyzes the reduction of oxygen to water. Electrons originating from reduced cytochrome c in the intermembrane space (IMS) are transferred via the dinuclear copper A center (CU(A)) of subunit 2 and heme A of subunit 1 to the active site in subunit 1, a binuclear center (BNC) formed by heme A3 and copper B (CU(B)). The BNC reduces molecular oxygen to 2 water molecules using 4 electrons from cytochrome c in the IMS and 4 protons from the mitochondrial matrix. This chain is Cytochrome c oxidase subunit 2 (MT-CO2), found in Mandrillus leucophaeus (Drill).